We begin with the raw amino-acid sequence, 491 residues long: Malonate-semialdehyde dehydrogenase 1 (491 aa).

The NAD(+) site is built by Ala154, Phe156, Lys180, Glu183, Arg184, Ser233, and Thr255. The active-site Nucleophile is the Cys288. Residue Glu386 coordinates NAD(+).

Belongs to the aldehyde dehydrogenase family. IolA subfamily. Homotetramer.

It carries out the reaction 3-oxopropanoate + NAD(+) + CoA + H2O = hydrogencarbonate + acetyl-CoA + NADH + H(+). The catalysed reaction is 2-methyl-3-oxopropanoate + NAD(+) + CoA + H2O = propanoyl-CoA + hydrogencarbonate + NADH + H(+). It participates in polyol metabolism; myo-inositol degradation into acetyl-CoA; acetyl-CoA from myo-inositol: step 7/7. Its function is as follows. Catalyzes the oxidation of malonate semialdehyde (MSA) and methylmalonate semialdehyde (MMSA) into acetyl-CoA and propanoyl-CoA, respectively. Is involved in a myo-inositol catabolic pathway. Bicarbonate, and not CO2, is the end-product of the enzymatic reaction. This Shouchella clausii (strain KSM-K16) (Alkalihalobacillus clausii) protein is Malonate-semialdehyde dehydrogenase 1.